We begin with the raw amino-acid sequence, 1141 residues long: Serine-aspartate repeat-containing protein E (1141 aa).

The signal sequence occupies residues 1 to 52 (MINRDNKKAITKKGMISNRLNKFSIRKYTVGTASILVGTTLIFGLGNQEAKA). Positions 23–34 (FSIRKYTVGTAS) match the YSIRK-G/S signaling motif motif. Residues 53-601 (AENTSTENAK…GDGTVKPEEK (549 aa)) form a ligand binding A region region. Residues 54 to 248 (ENTSTENAKQ…RSTKPVATAP (195 aa)) are disordered. Basic and acidic residues predominate over residues 61 to 75 (AKQDDATTSDNKEVV). The span at 77–90 (ETENNSTTENDSTN) shows a compositional bias: low complexity. Residues 92 to 108 (IKKETNTDSQPEAKEES) show a composition bias toward basic and acidic residues. A compositionally biased stretch (low complexity) spans 109–126 (TTSSTQQQQNNVTATTET). Over residues 130-145 (NIEKENVKPSTDKTAT) the composition is skewed to basic and acidic residues. Over residues 159-207 (NYTNNDVTTKPSTSEIQTKPTTPQESTNIENSQPQPTPSKVDNQVTDAT) the composition is skewed to polar residues. A compositionally biased stretch (basic and acidic residues) spans 216–241 (SKEELKNNPEKLKELVRNDNNTDRST). CNA-B domains follow at residues 602–714 (LYKI…YKEP), 715–824 (KYNL…YKTP), and 825–935 (KYSL…EEDT). The segment at 929-1117 (GYFEEDTSDS…GSENNGSNNA (189 aa)) is disordered. The segment covering 930–1080 (YFEEDTSDSD…DSDSDSDSDS (151 aa)) has biased composition (acidic residues). The LPXTG sorting signal motif lies at 1104 to 1108 (LPETG). Residue T1107 is modified to Pentaglycyl murein peptidoglycan amidated threonine. Residues 1108–1141 (GSENNGSNNATLFGGLFAALGSLLLFGRRKKQNK) constitute a propeptide, removed by sortase.

Belongs to the serine-aspartate repeat-containing protein (SDr) family. Interacts with host complement factor H/CFAH (via C-terminus). Interacts with host complement regulator C4BPA.

It is found in the secreted. The protein resides in the cell wall. Its function is as follows. Cell surface-associated calcium-binding protein which plays an important role in adhesion and pathogenesis. Contributes to the resistance to killing by innate immune components in blood and thus attenuates bacterial clearance by interacting with host complement factor H/CFAH and modulating its activity. Inhibits also bacterial opsonization and killing by interacting with host complement regulator C4BPA and thus inhibiting classical complement pathway activation. This Staphylococcus aureus (strain Mu50 / ATCC 700699) protein is Serine-aspartate repeat-containing protein E (sdrE).